We begin with the raw amino-acid sequence, 104 residues long: Phycoerythrin alpha-2 chain, chloroplastic (104 aa).

Residues 1-37 (MSAKIIAFSAVVATASAFAPTAGFVPRLRSGATSVNM) constitute a chloroplast transit peptide. A 5-hydroxylysine modification is found at K41. Residues C56 and R58 each coordinate 15,16-dihydrobiliverdin. A 15,16-dihydrobiliverdin chromophore region spans residues 61–63 (KEY). K78 is a 15,16-dihydrobiliverdin binding site.

The protein belongs to the phycoerythrin family. As to quaternary structure, heterotetramer of 2 different alpha chains and 2 identical beta chains. The subunit composition could comprise of any combination of 2 out of 4 different alpha units with an invariant beta unit. Post-translationally, contains one covalently linked 15,16-dihydrobiliverdin chromophore.

Its subcellular location is the plastid. The protein resides in the chloroplast thylakoid membrane. Light-harvesting photosynthetic tetrapyrrole chromophore-protein from the phycobiliprotein complex. The sequence is that of Phycoerythrin alpha-2 chain, chloroplastic (cpeA2) from Rhodomonas sp. (strain CS 24) (Chroomonas sp. (strain CS24)).